A 436-amino-acid chain; its full sequence is Serine--tRNA ligase (436 aa).

241–243 serves as a coordination point for L-serine; sequence TSE. 272–274 is an ATP binding site; the sequence is RAE. E295 contributes to the L-serine binding site. Residue 359 to 362 coordinates ATP; sequence EISS. S395 lines the L-serine pocket.

Belongs to the class-II aminoacyl-tRNA synthetase family. Type-1 seryl-tRNA synthetase subfamily. Homodimer. The tRNA molecule binds across the dimer.

The protein localises to the cytoplasm. The catalysed reaction is tRNA(Ser) + L-serine + ATP = L-seryl-tRNA(Ser) + AMP + diphosphate + H(+). It catalyses the reaction tRNA(Sec) + L-serine + ATP = L-seryl-tRNA(Sec) + AMP + diphosphate + H(+). It participates in aminoacyl-tRNA biosynthesis; selenocysteinyl-tRNA(Sec) biosynthesis; L-seryl-tRNA(Sec) from L-serine and tRNA(Sec): step 1/1. Functionally, catalyzes the attachment of serine to tRNA(Ser). Is also able to aminoacylate tRNA(Sec) with serine, to form the misacylated tRNA L-seryl-tRNA(Sec), which will be further converted into selenocysteinyl-tRNA(Sec). The protein is Serine--tRNA ligase of Beijerinckia indica subsp. indica (strain ATCC 9039 / DSM 1715 / NCIMB 8712).